The chain runs to 437 residues: MTQFLPPNLLALFAPRDPIPYLPPLEKLPHEKHHNQPYCGIAPYIREFEDPRDAPPPTRAETREERMERKRREKIERRQQEVETELKMWDPHNDPNAQGDAFKTLFVARVNYDTTESKLRREFEVYGPIKRIHMVYSKRSGKPRGYAFIEYEHERDMHSAYKHADGKKIDGRRVLVDVERGRTVKGWRPRRLGGGLGGTRRGGADVNIRHSGRDDTSRYDERPGPSPLPHRDRDRDRERERRERSRERDKERERRRSRSRDRRRRSRSRDKEERRRSRERSKDKDRDRKRRSSRSRERARRERERKEELRGGGGDMAEPSEAGDAPPDDGPPGELGPDGPDGPEEKGRDRDRERRRSHRSERERRRDRDRDRDRDREHKRGERGSERGRDEARGGGGGQDNGLEGLGNDSRDMYMESEGGDGYLAPENGYLMEAAPE.

At T2 the chain carries N-acetylthreonine. The tract at residues 48–79 (FEDPRDAPPPTRAETREERMERKRREKIERRQ) is disordered. A compositionally biased stretch (basic and acidic residues) spans 60–79 (AETREERMERKRREKIERRQ). A required for interaction with U1 RNA region spans residues 92 to 202 (HNDPNAQGDA…GGGLGGTRRG (111 aa)). One can recognise an RRM domain in the interval 103–181 (KTLFVARVNY…RRVLVDVERG (79 aa)). Position 118 is an N6-acetyllysine (K118). Y126 is subject to Phosphotyrosine. Positions 187-437 (WRPRRLGGGL…NGYLMEAAPE (251 aa)) are disordered. The span at 192–201 (LGGGLGGTRR) shows a compositional bias: gly residues. The segment covering 207–254 (NIRHSGRDDTSRYDERPGPSPLPHRDRDRDRERERRERSRERDKERER) has biased composition (basic and acidic residues). Residues S226 and S268 each carry the phosphoserine modification. Basic residues predominate over residues 255 to 268 (RRSRSRDRRRRSRS). 2 stretches are compositionally biased toward basic and acidic residues: residues 269–286 (RDKE…DKDR) and 294–310 (RSRE…EELR). At S320 the chain carries Phosphoserine. Basic and acidic residues predominate over residues 343–393 (PEEKGRDRDRERRRSHRSERERRRDRDRDRDRDREHKRGERGSERGRDEAR). A Glycyl lysine isopeptide (Lys-Gly) (interchain with G-Cter in SUMO2) cross-link involves residue K346. S410 carries the phosphoserine modification.

Component of the U1 snRNP. The U1 snRNP is composed of the U1 snRNA and the 7 core Sm proteins SNRPB, SNRPD1, SNRPD2, SNRPD3, SNRPE, SNRPF and SNRPG that assemble in a heptameric protein ring on the Sm site of the small nuclear RNA to form the core snRNP, and at least three U1 snRNP-specific proteins SNRNP70/U1-70K, SNRPA/U1-A and SNRPC/U1-C. Interacts with SCNM1. Found in a pre-mRNA splicing complex with SFRS4, SFRS5, SNRNP70, SNRPA1, SRRM1 and SRRM2. Found in a pre-mRNA exonic splicing enhancer (ESE) complex with SNRNP70, SNRPA1, SRRM1 and TRA2B/SFRS10. Interacts with dephosphorylated SFRS13A and SFPQ. Interacts with NUDT21/CPSF5, CPSF6, SCAF11, and ZRANB2. Interacts with GEMIN5. Interacts with FUS. Post-translationally, the N-terminus is blocked. Extensively phosphorylated on serine residues in the C-terminal region.

The protein resides in the nucleus speckle. Its subcellular location is the nucleus. It is found in the nucleoplasm. In terms of biological role, component of the spliceosomal U1 snRNP, which is essential for recognition of the pre-mRNA 5' splice-site and the subsequent assembly of the spliceosome. SNRNP70 binds to the loop I region of U1-snRNA. Truncated isoforms that lack the RRM domain cannot bind U1-snRNA. The chain is U1 small nuclear ribonucleoprotein 70 kDa (SNRNP70) from Homo sapiens (Human).